We begin with the raw amino-acid sequence, 136 residues long: Large ribosomal subunit protein uL16 (136 aa).

This sequence belongs to the universal ribosomal protein uL16 family. Part of the 50S ribosomal subunit.

Its function is as follows. Binds 23S rRNA and is also seen to make contacts with the A and possibly P site tRNAs. This chain is Large ribosomal subunit protein uL16, found in Shewanella pealeana (strain ATCC 700345 / ANG-SQ1).